We begin with the raw amino-acid sequence, 688 residues long: Translation initiation factor IF-2 (688 aa).

Basic and acidic residues-rich tracts occupy residues 53 to 62 (GKEKSEKTKE) and 86 to 95 (KRDDKNEKVN). Residues 53–100 (GKEKSEKTKEEDDEIETTAKNPIKESMNNKKSNKRDDKNEKVNTENAE) form a disordered region. The region spanning 187 to 354 (KRSPIITVMG…MILLSSEILE (168 aa)) is the tr-type G domain. The segment at 196-203 (GHVDHGKT) is G1. 196-203 (GHVDHGKT) contributes to the GTP binding site. A G2 region spans residues 221–225 (GITQH). Residues 242-245 (DTPG) form a G3 region. Residues 242–246 (DTPGH) and 296–299 (NKID) contribute to the GTP site. The G4 stretch occupies residues 296–299 (NKID). A G5 region spans residues 332-334 (SAH).

Belongs to the TRAFAC class translation factor GTPase superfamily. Classic translation factor GTPase family. IF-2 subfamily.

It localises to the cytoplasm. Functionally, one of the essential components for the initiation of protein synthesis. Protects formylmethionyl-tRNA from spontaneous hydrolysis and promotes its binding to the 30S ribosomal subunits. Also involved in the hydrolysis of GTP during the formation of the 70S ribosomal complex. The sequence is that of Translation initiation factor IF-2 from Clostridium botulinum (strain Kyoto / Type A2).